The primary structure comprises 141 residues: Large ribosomal subunit protein mL42 (141 aa).

Residues 1–31 constitute a mitochondrion transit peptide; the sequence is MTAAVKWAVSHRTIWRHLFPIQNGAISSACH.

The protein belongs to the mitochondrion-specific ribosomal protein mL42 family. As to quaternary structure, component of the mitochondrial ribosome large subunit (39S) which comprises a 16S rRNA and about 50 distinct proteins. Component of the mitochondrial ribosome small subunit (28S) which comprises a 12S rRNA and about 30 distinct proteins.

The protein localises to the mitochondrion. This Rattus norvegicus (Rat) protein is Large ribosomal subunit protein mL42 (Mrpl42).